We begin with the raw amino-acid sequence, 146 residues long: Hemoglobin subunit beta (146 aa).

In terms of domain architecture, Globin spans 2-146 (HWTAEEKQLI…VAHALARKYH (145 aa)). Residues H63 and H92 each contribute to the heme b site.

It belongs to the globin family. As to quaternary structure, heterotetramer of two alpha chains and two beta chains. As to expression, red blood cells.

In terms of biological role, involved in oxygen transport from the lung to the various peripheral tissues. The polypeptide is Hemoglobin subunit beta (HBB) (Ciconia ciconia (White stork)).